We begin with the raw amino-acid sequence, 36 residues long: Pancreatic polypeptide (36 aa).

Position 36 is a tyrosine amide (tyrosine 36).

This sequence belongs to the NPY family.

It is found in the secreted. Hormone secreted by pancreatic cells that acts as a regulator of pancreatic and gastrointestinal functions. This Anser anser anser (Western greylag goose) protein is Pancreatic polypeptide (PPY).